Consider the following 308-residue polypeptide: Ornithine carbamoyltransferase (308 aa).

Carbamoyl phosphate contacts are provided by residues 55-58 (STRT), Q82, R106, and 133-136 (HPCQ). L-ornithine contacts are provided by residues N164, D227, and 231–232 (SM). Residues 267–268 (CL) and R295 contribute to the carbamoyl phosphate site.

Belongs to the aspartate/ornithine carbamoyltransferase superfamily. OTCase family.

It localises to the cytoplasm. The enzyme catalyses carbamoyl phosphate + L-ornithine = L-citrulline + phosphate + H(+). It participates in amino-acid biosynthesis; L-arginine biosynthesis; L-arginine from L-ornithine and carbamoyl phosphate: step 1/3. In terms of biological role, reversibly catalyzes the transfer of the carbamoyl group from carbamoyl phosphate (CP) to the N(epsilon) atom of ornithine (ORN) to produce L-citrulline. In Prochlorococcus marinus (strain MIT 9312), this protein is Ornithine carbamoyltransferase.